Reading from the N-terminus, the 122-residue chain is Large ribosomal subunit protein uL14 (122 aa).

It belongs to the universal ribosomal protein uL14 family. In terms of assembly, part of the 50S ribosomal subunit. Forms a cluster with proteins L3 and L19. In the 70S ribosome, L14 and L19 interact and together make contacts with the 16S rRNA in bridges B5 and B8.

In terms of biological role, binds to 23S rRNA. Forms part of two intersubunit bridges in the 70S ribosome. This Mycobacteroides abscessus (strain ATCC 19977 / DSM 44196 / CCUG 20993 / CIP 104536 / JCM 13569 / NCTC 13031 / TMC 1543 / L948) (Mycobacterium abscessus) protein is Large ribosomal subunit protein uL14.